Consider the following 402-residue polypeptide: Type II NADH:quinone oxidoreductase (402 aa).

FAD is bound by residues 12–16 (GAGYA), 39–40 (NK), and V83. Residue E172 is part of the active site. FAD contacts are provided by residues D302, 319 to 320 (AQ), and K379.

The protein belongs to the NADH dehydrogenase family. FAD serves as cofactor.

It localises to the cell membrane. It carries out the reaction a quinone + NADH + H(+) = a quinol + NAD(+). In terms of biological role, alternative, nonproton pumping NADH:quinone oxidoreductase that delivers electrons to the respiratory chain by oxidation of NADH and reduction of quinones, and contributes to the regeneration of NAD(+). The protein is Type II NADH:quinone oxidoreductase of Staphylococcus epidermidis (strain ATCC 12228 / FDA PCI 1200).